The chain runs to 340 residues: Probable allantoicase (340 aa).

The protein belongs to the allantoicase family.

The catalysed reaction is allantoate + H2O = (S)-ureidoglycolate + urea. Its pathway is nitrogen metabolism; (S)-allantoin degradation; (S)-ureidoglycolate from allantoate (aminidohydrolase route): step 1/1. This is Probable allantoicase from Rhizobium meliloti (strain 1021) (Ensifer meliloti).